Reading from the N-terminus, the 174-residue chain is Large ribosomal subunit protein uL10 (174 aa).

It belongs to the universal ribosomal protein uL10 family. As to quaternary structure, part of the ribosomal stalk of the 50S ribosomal subunit. The N-terminus interacts with L11 and the large rRNA to form the base of the stalk. The C-terminus forms an elongated spine to which L12 dimers bind in a sequential fashion forming a multimeric L10(L12)X complex.

Functionally, forms part of the ribosomal stalk, playing a central role in the interaction of the ribosome with GTP-bound translation factors. The polypeptide is Large ribosomal subunit protein uL10 (Geobacter sulfurreducens (strain ATCC 51573 / DSM 12127 / PCA)).